We begin with the raw amino-acid sequence, 2925 residues long: Otogelin (2925 aa).

The N-terminal stretch at 1–25 (MGVLASALCWLLCVWLPWGEQAAES) is a signal peptide. Residues 39–69 (GRSGARGMRNVKGMRNGPAQTRVSSSSSHQE) form a disordered region. The segment covering 56–69 (PAQTRVSSSSSHQE) has biased composition (polar residues). The EGF-like domain occupies 102–139 (HRAKCAPSYLFSCFNGGECVHPAFCDCRRFNATGPRCQ). Intrachain disulfides connect C106–C120, C114–C126, C128–C138, C152–C285, and C199–C206. The region spanning 150 to 322 (SICRAWGQHH…SWQEQAPNQP (173 aa)) is the VWFD 1 domain. Positions 316-335 (EQAPNQPPGPTTSSLPRPPC) are disordered. Over residues 326–335 (TTSSLPRPPC) the composition is skewed to polar residues. Positions 512-688 (AECSVTGDIH…NSWKTLSACS (177 aa)) constitute a VWFD 2 domain. Intrachain disulfides connect C514-C652, C536-C687, and C558-C566. In terms of domain architecture, TIL spans 780-844 (CEASKEYSPC…ADLCVPRNQC (65 aa)). N-linked (GlcNAc...) asparagine glycosylation occurs at N914. Residues 984-1152 (STCTAYGDRH…SWAAVECPDT (169 aa)) enclose the VWFD 3 domain. 2 disulfide bridges follow: C986–C1115 and C1030–C1037. Residues 1476–1540 (LGNETLPPSQ…PVVSPGPTQT (65 aa)) form a disordered region. N-linked (GlcNAc...) asparagine glycosylation is present at N1478. Residues 1502 to 1528 (PRTPTHRPALTPAAPLTTALNPPVTAT) show a composition bias toward low complexity. N1612 carries an N-linked (GlcNAc...) asparagine glycan. Disordered regions lie at residues 1636–1679 (GHGS…HKAV), 1693–1715 (VPQP…AGTA), and 1737–1788 (KGEA…ASLS). Positions 1650 to 1659 (SLTASPSSRP) are enriched in polar residues. The segment covering 1694–1708 (PQPTQAQSASSPSTP) has biased composition (low complexity). Positions 1751 to 1764 (SPQPHPLPSAPPRP) are enriched in pro residues. The VWFD 4 domain occupies 2110–2289 (CRCSIFPDLS…SWQVPSSLTS (180 aa)). Cystine bridges form between C2112–C2249, C2840–C2889, C2854–C2903, C2865–C2920, and C2869–C2922. The 86-residue stretch at 2840–2925 (CKKVTIRMTI…EPTDCACQWS (86 aa)) folds into the CTCK domain.

The protein belongs to the otogelin family. N-glycosylated. Not O-glycosylated.

The protein localises to the apical cell membrane. Its subcellular location is the secreted. It localises to the extracellular space. Functionally, glycoprotein specific to acellular membranes of the inner ear. May be required for the anchoring of the otoconial membranes and cupulae to the underlying neuroepithelia in the vestibule. May be involved in the organization and/or stabilization of the fibrillar network that compose the tectorial membrane in the cochlea. May play a role in mechanotransduction processes. The sequence is that of Otogelin (OTOG) from Homo sapiens (Human).